The primary structure comprises 418 residues: Cytochrome P450 monooxygenase ABA2 (418 aa).

Heme is bound at residue cysteine 355.

Belongs to the cytochrome P450 family. Requires heme as cofactor.

Its pathway is hormone biosynthesis. Cytochrome P450 monooxygenase involved in the biosynthesis of abscisic acid (ABA), a phytohormone that acts antagonistically toward salicylic acid (SA), jasmonic acid (JA) and ethylene (ETH) signaling, to impede plant defense responses. During pathogen-host interaction, ABA plays a dual role in disease severity by increasing plant susceptibility and accelerating pathogenesis in the fungus itself. The first step of the pathway catalyzes the reaction from farnesyl diphosphate to alpha-ionylideneethane performed by the alpha-ionylideneethane synthase ABA3 via a three-step reaction mechanism involving 2 neutral intermediates, beta-farnesene and allofarnesene. The cytochrome P450 monooxygenase ABA1 might then be involved in the conversion of alpha-ionylideneethane to alpha-ionylideneacetic acid. Alpha-ionylideneacetic acid is further converted to abscisic acid in 2 steps involving the cytochrome P450 monooxygenase ABA2 and the short-chain dehydrogenase/reductase ABA4, via the intermediates 1'-deoxy-ABA or 1',4'-trans-diol-ABA, depending on the order of action of these 2 enzymes. ABA2 is responsible for the hydroxylation of carbon atom C-1' and ABA4 might be involved in the oxidation of the C-4' carbon atom. This Pyricularia oryzae (strain Y34) (Rice blast fungus) protein is Cytochrome P450 monooxygenase ABA2.